A 123-amino-acid chain; its full sequence is Small ribosomal subunit protein uS11 (123 aa).

Belongs to the universal ribosomal protein uS11 family. In terms of assembly, part of the 30S ribosomal subunit. Interacts with proteins S7 and S18. Binds to IF-3.

In terms of biological role, located on the platform of the 30S subunit, it bridges several disparate RNA helices of the 16S rRNA. Forms part of the Shine-Dalgarno cleft in the 70S ribosome. This is Small ribosomal subunit protein uS11 from Coxiella burnetii (strain CbuG_Q212) (Coxiella burnetii (strain Q212)).